Here is a 445-residue protein sequence, read N- to C-terminus: 23S rRNA (uracil(1939)-C(5))-methyltransferase RlmD (445 aa).

The disordered stretch occupies residues 1 to 21 (MARRRKQLPETPEPASIETLS). The 60-residue stretch at 5–64 (RKQLPETPEPASIETLSHDGRGIARRDGKTTFIDNALPGEEVMFKFTYMRRKFDEGKAVE) folds into the TRAM domain. Residues C77, C83, C86, and C165 each contribute to the [4Fe-4S] cluster site. S-adenosyl-L-methionine-binding residues include Q275, F304, N309, E325, D352, and D373. Catalysis depends on C399, which acts as the Nucleophile.

This sequence belongs to the class I-like SAM-binding methyltransferase superfamily. RNA M5U methyltransferase family. RlmD subfamily.

The catalysed reaction is uridine(1939) in 23S rRNA + S-adenosyl-L-methionine = 5-methyluridine(1939) in 23S rRNA + S-adenosyl-L-homocysteine + H(+). Functionally, catalyzes the formation of 5-methyl-uridine at position 1939 (m5U1939) in 23S rRNA. This Alcanivorax borkumensis (strain ATCC 700651 / DSM 11573 / NCIMB 13689 / SK2) protein is 23S rRNA (uracil(1939)-C(5))-methyltransferase RlmD.